Here is a 495-residue protein sequence, read N- to C-terminus: Anaerobic nitric oxide reductase flavorubredoxin (495 aa).

A zinc metallo-hydrolase region spans residues 30-210; the sequence is HKGTSYNSYL…PFSPLVTAKI (181 aa). Residues His79, Glu81, Asp83, His147, Asp166, and His227 each coordinate Fe cation. The Flavodoxin-like domain occupies 254-393; the sequence is ITLFYDSMSN…ECREHGRQLA (140 aa). FMN-binding positions include 260 to 264 and 342 to 369; these read SMSNN and AFGS…DISI. Positions 438-489 constitute a Rubredoxin-like domain; that stretch reads DQAMLCTVCQWVYDPAQGEPDQLVAPGTPWAQVPDSFLCPGCGIGKEVFEPC. Fe cation contacts are provided by Cys443, Cys446, Cys476, and Cys479.

This sequence in the N-terminal section; belongs to the zinc metallo-hydrolase group 3 family. Homotetramer. Fe cation is required as a cofactor. Requires FMN as cofactor.

It localises to the cytoplasm. Its pathway is nitrogen metabolism; nitric oxide reduction. In terms of biological role, anaerobic nitric oxide reductase; uses NADH to detoxify nitric oxide (NO), protecting several 4Fe-4S NO-sensitive enzymes. Has at least 2 reductase partners, only one of which (NorW, flavorubredoxin reductase) has been identified. NO probably binds to the di-iron center; electrons enter from the NorW at rubredoxin and are transferred sequentially to the FMN center and the di-iron center. Also able to function as an aerobic oxygen reductase. The polypeptide is Anaerobic nitric oxide reductase flavorubredoxin (Aeromonas hydrophila subsp. hydrophila (strain ATCC 7966 / DSM 30187 / BCRC 13018 / CCUG 14551 / JCM 1027 / KCTC 2358 / NCIMB 9240 / NCTC 8049)).